Consider the following 181-residue polypeptide: HGPRTase-like protein 2 (181 aa).

This sequence belongs to the purine/pyrimidine phosphoribosyltransferase family. Archaeal HPRT subfamily.

In terms of biological role, may catalyze a purine salvage reaction, the substrate is unknown. This chain is HGPRTase-like protein 2, found in Haloquadratum walsbyi (strain DSM 16854 / JCM 12705 / C23).